A 213-amino-acid polypeptide reads, in one-letter code: NDR1/HIN1-like protein 26 (213 aa).

Residues 1–27 (MSQISITSPKHCAKKGGININNRHKKL) are Cytoplasmic-facing. The chain crosses the membrane as a helical span at residues 28-48 (FFTFSTFFSGLLLIIFLVWLI). Over 49-213 (LHPERPEFSL…LQGTRCSTTI (165 aa)) the chain is Lumenal. Asn-67, Asn-77, and Asn-195 each carry an N-linked (GlcNAc...) asparagine glycan.

As to expression, expressed in the vasculature of roots, rosette leaves, stems, cauline leaves and flowers. Specifically expressed in phloem.

The protein localises to the cell junction. It localises to the plasmodesma. It is found in the endoplasmic reticulum membrane. Involved in the regulation of sugar, amino acid and some primary metabolite export from companion cells (CCs) to sieve elements (SEs) in phloem. Required for apoplastic phloem sugar loading in source leaves in order to transport it to sink tissues. Required for correct sugar partitioning between source leaves and sink organs. The chain is NDR1/HIN1-like protein 26 from Arabidopsis thaliana (Mouse-ear cress).